Consider the following 94-residue polypeptide: HssA/B-like protein 49 (94 aa).

The segment at 1–20 (MTLFSSISSISNPMTSSKSS) is disordered.

Belongs to the hssA/B family.

The polypeptide is HssA/B-like protein 49 (hssl49) (Dictyostelium discoideum (Social amoeba)).